The chain runs to 310 residues: Porphobilinogen deaminase (310 aa).

Position 242 is an S-(dipyrrolylmethanemethyl)cysteine (Cys-242).

It belongs to the HMBS family. In terms of assembly, monomer. It depends on dipyrromethane as a cofactor.

The catalysed reaction is 4 porphobilinogen + H2O = hydroxymethylbilane + 4 NH4(+). It participates in porphyrin-containing compound metabolism; protoporphyrin-IX biosynthesis; coproporphyrinogen-III from 5-aminolevulinate: step 2/4. In terms of biological role, tetrapolymerization of the monopyrrole PBG into the hydroxymethylbilane pre-uroporphyrinogen in several discrete steps. The chain is Porphobilinogen deaminase from Shewanella oneidensis (strain ATCC 700550 / JCM 31522 / CIP 106686 / LMG 19005 / NCIMB 14063 / MR-1).